A 487-amino-acid polypeptide reads, in one-letter code: Rhoptry apical surface protein 1 (487 aa).

Positions glutamate 337–glutamine 487 are disordered. Composition is skewed to basic and acidic residues over residues aspartate 385–alanine 399 and glutamate 454–tyrosine 475.

In terms of assembly, interacts with RASP2.

It is found in the cytoplasmic vesicle. It localises to the secretory vesicle. The protein resides in the rhoptry membrane. The polypeptide is Rhoptry apical surface protein 1 (Toxoplasma gondii (strain ATCC 50853 / GT1)).